Consider the following 347-residue polypeptide: Quinolinate synthase (347 aa).

2 residues coordinate iminosuccinate: His-47 and Ser-68. A [4Fe-4S] cluster-binding site is contributed by Cys-113. Iminosuccinate contacts are provided by residues 139 to 141 (YAN) and Ser-156. Position 200 (Cys-200) interacts with [4Fe-4S] cluster. Iminosuccinate-binding positions include 226-228 (HPE) and Thr-243. Cys-297 contributes to the [4Fe-4S] cluster binding site.

The protein belongs to the quinolinate synthase family. Type 1 subfamily. Requires [4Fe-4S] cluster as cofactor.

The protein resides in the cytoplasm. The enzyme catalyses iminosuccinate + dihydroxyacetone phosphate = quinolinate + phosphate + 2 H2O + H(+). Its pathway is cofactor biosynthesis; NAD(+) biosynthesis; quinolinate from iminoaspartate: step 1/1. Functionally, catalyzes the condensation of iminoaspartate with dihydroxyacetone phosphate to form quinolinate. This chain is Quinolinate synthase, found in Escherichia fergusonii (strain ATCC 35469 / DSM 13698 / CCUG 18766 / IAM 14443 / JCM 21226 / LMG 7866 / NBRC 102419 / NCTC 12128 / CDC 0568-73).